The primary structure comprises 484 residues: Protein nucleotidyltransferase YdiU (484 aa).

ATP-binding residues include Gly-81, Gly-83, Arg-84, Lys-103, Asp-115, Gly-116, Arg-166, and Arg-173. Asp-244 acts as the Proton acceptor in catalysis. Residues Asn-245 and Asp-254 each coordinate Mg(2+). Asp-254 lines the ATP pocket.

The protein belongs to the SELO family. It depends on Mg(2+) as a cofactor. Requires Mn(2+) as cofactor.

It catalyses the reaction L-seryl-[protein] + ATP = 3-O-(5'-adenylyl)-L-seryl-[protein] + diphosphate. It carries out the reaction L-threonyl-[protein] + ATP = 3-O-(5'-adenylyl)-L-threonyl-[protein] + diphosphate. The catalysed reaction is L-tyrosyl-[protein] + ATP = O-(5'-adenylyl)-L-tyrosyl-[protein] + diphosphate. The enzyme catalyses L-histidyl-[protein] + UTP = N(tele)-(5'-uridylyl)-L-histidyl-[protein] + diphosphate. It catalyses the reaction L-seryl-[protein] + UTP = O-(5'-uridylyl)-L-seryl-[protein] + diphosphate. It carries out the reaction L-tyrosyl-[protein] + UTP = O-(5'-uridylyl)-L-tyrosyl-[protein] + diphosphate. Nucleotidyltransferase involved in the post-translational modification of proteins. It can catalyze the addition of adenosine monophosphate (AMP) or uridine monophosphate (UMP) to a protein, resulting in modifications known as AMPylation and UMPylation. The sequence is that of Protein nucleotidyltransferase YdiU from Shewanella oneidensis (strain ATCC 700550 / JCM 31522 / CIP 106686 / LMG 19005 / NCIMB 14063 / MR-1).